A 434-amino-acid polypeptide reads, in one-letter code: MTGRRPTRPRLFSRGSFLESSRVADILRAETTGGLLLIAAATVAIVWANTPWSASYADLRDLRVGPQAWHLDLTLGAWAADGLLAIFFFVAGLELKREFVAGDLRDPRRAALPVVAAMGGMAVPALVYVLWNLGGDGALQGWAIPTATDIAFAVAILAVISTHLPTGLRTFLLTLAVVDDLLAITIIALFYTDELHLGYLAAAAVPLLVFALLVQRRIHRGWLLIPLAATAWVLVHESGVHATVAGVLLGFAVPVLRSDGQEGPGLAEHLEHLVRPLSAGLAVPVFAFFAAGVTVGGFDGLVDALSDPVALGVVTGLVVGKTVGIAGSTWLLATFTRADLDDQLSWVDVVGLAMLAGIGFTVSLLIGELAFGSGTPRDDHVKVGVLVGSLAATALATGVLRMRNRAYRRLVEIEEQDADADGVPDVYQRDADEG.

11 helical membrane passes run 34 to 54, 73 to 93, 111 to 131, 141 to 161, 171 to 191, 194 to 214, 233 to 253, 278 to 298, 313 to 333, 346 to 366, and 380 to 400; these read GLLL…PWSA, LTLG…VAGL, ALPV…YVLW, GWAI…AVIS, FLLT…ALFY, ELHL…ALLV, VLVH…GFAV, SAGL…VGGF, VVTG…WLLA, WVDV…SLLI, and HVKV…TGVL.

Belongs to the NhaA Na(+)/H(+) (TC 2.A.33) antiporter family.

It localises to the cell membrane. It carries out the reaction Na(+)(in) + 2 H(+)(out) = Na(+)(out) + 2 H(+)(in). Functionally, na(+)/H(+) antiporter that extrudes sodium in exchange for external protons. This chain is Na(+)/H(+) antiporter NhaA 1, found in Nocardioides sp. (strain ATCC BAA-499 / JS614).